The following is a 180-amino-acid chain: Large ribosomal subunit protein uL5c (180 aa).

Belongs to the universal ribosomal protein uL5 family. In terms of assembly, part of the 50S ribosomal subunit; contacts the 5S rRNA.

Its subcellular location is the plastid. It localises to the chloroplast. Its function is as follows. Binds 5S rRNA, forms part of the central protuberance of the 50S subunit. The sequence is that of Large ribosomal subunit protein uL5c (rpl5) from Oltmannsiellopsis viridis (Marine flagellate).